A 107-amino-acid chain; its full sequence is uncharacterized protein (107 aa).

Residues 1-4 (MSLV) are Cytoplasmic-facing. A helical membrane pass occupies residues 5–25 (IDIADTIVSLTALIGLIITLI). Topologically, residues 26 to 107 (KFHSQNKEDA…ELCRSSDRSK (82 aa)) are extracellular.

The protein resides in the host membrane. This is an uncharacterized protein from Acidianus sp. F28 (AFV-2).